We begin with the raw amino-acid sequence, 585 residues long: Type IV pilus assembly ATPase TfpB (585 aa).

Position 346–351 (346–351 (GSGKTT)) interacts with ATP. Residues cysteine 476, cysteine 479, cysteine 511, and cysteine 514 each coordinate Zn(2+).

Belongs to the GSP E family.

The protein resides in the cytoplasm. In terms of biological role, ATPase component of the type IV pilus (T4P). Acts as a molecular motor to provide the energy that is required for biogenesis of the pilus and the extrusion of substrates generated in the cytoplasm. TfpB is required for optimal T4P extension and, consequently, efficient natural transformation. May play a role in initiating T4P extension. The protein is Type IV pilus assembly ATPase TfpB of Acinetobacter baylyi (strain ATCC 33305 / BD413 / ADP1).